A 319-amino-acid chain; its full sequence is Lipooligosaccharide heptosyltransferase 2 (319 aa).

Belongs to the glycosyltransferase 9 family.

The catalysed reaction is an L-alpha-D-Hep-(1-&gt;5)-[alpha-Kdo-(2-&gt;4)]-alpha-Kdo-(2-&gt;6)-lipid A + ADP-L-glycero-beta-D-manno-heptose = an L-alpha-D-Hep-(1-&gt;3)-L-alpha-D-Hep-(1-&gt;5)-[alpha-Kdo-(2-&gt;4)]-alpha-Kdo-(2-&gt;6)-lipid A + ADP + H(+). It participates in bacterial outer membrane biogenesis; LOS core biosynthesis. Glycosyltransferase involved in the biosynthesis of the core oligosaccharide region of lipooligosaccharide (LOS). Catalyzes the addition of the second heptose unit to the heptosyl-Kdo2-lipid A module. In Campylobacter jejuni subsp. jejuni serotype O:2 (strain ATCC 700819 / NCTC 11168), this protein is Lipooligosaccharide heptosyltransferase 2.